The chain runs to 240 residues: Ribonuclease PH (240 aa).

Phosphate is bound by residues R86 and 124 to 126; that span reads GTR.

Belongs to the RNase PH family. Homohexameric ring arranged as a trimer of dimers.

It catalyses the reaction tRNA(n+1) + phosphate = tRNA(n) + a ribonucleoside 5'-diphosphate. Its function is as follows. Phosphorolytic 3'-5' exoribonuclease that plays an important role in tRNA 3'-end maturation. Removes nucleotide residues following the 3'-CCA terminus of tRNAs; can also add nucleotides to the ends of RNA molecules by using nucleoside diphosphates as substrates, but this may not be physiologically important. Probably plays a role in initiation of 16S rRNA degradation (leading to ribosome degradation) during starvation. This chain is Ribonuclease PH, found in Rhodospirillum rubrum (strain ATCC 11170 / ATH 1.1.1 / DSM 467 / LMG 4362 / NCIMB 8255 / S1).